Reading from the N-terminus, the 446-residue chain is MVISRSNYRNICSYTFFMVNLFILILSVINEGFCEIAYVIISVSSVLFCVIIICLERQGGFLNPMTFCIISVFFFILIRPVFFSQNITENLNEVITAGLEIDEIYVFYSLAVVNIPLAFTVLLYSVQKGTVSKLVGQLPDLFFYNKQLSMILLWGGLFSAIFLIKSYKKFIILGQVSVFEADAYGLYDELFWFTLSKYCYILSLLFSKNKNFILYSLLIFITSIGYILVGLRGYTIAYGFLLLFFLDIRYRLKIKWLLLVAILVTTISSLFLNYRIGIEVNSGLLGIIFNPLLQQGASFETVYGALKYNEKILSCISYYDYFFTNKDIGSCIDIARGVYFKEGGSFASSFYSELIYLGWIIGSVALLLFAFSLAFVQSCYEKIIKNSMNNKLAYTYRLIIFLALPNLIYFARSSLFDFITKVLFIALFIGGLSIVRHIALNIKKCH.

The next 11 membrane-spanning stretches (helical) occupy residues 11–31 (ICSYTFFMVNLFILILSVINE), 33–53 (FCEIAYVIISVSSVLFCVIII), 58–78 (QGGFLNPMTFCIISVFFFILI), 104–124 (IYVFYSLAVVNIPLAFTVLLY), 147–167 (QLSMILLWGGLFSAIFLIKSY), 186–206 (LYDELFWFTLSKYCYILSLLF), 211–231 (NFILYSLLIFITSIGYILVGL), 252–272 (LKIKWLLLVAILVTTISSLFL), 355–375 (IYLGWIIGSVALLLFAFSLAF), 391–411 (KLAYTYRLIIFLALPNLIYFA), and 415–435 (LFDFITKVLFIALFIGGLSIV).

It localises to the cell inner membrane. It catalyses the reaction n lipid-linked O-antigen repeat units = a lipid-linked O antigen + (n-1) polyisoprenyl diphosphate.. Its pathway is bacterial outer membrane biogenesis; LPS O-antigen biosynthesis. In terms of biological role, polymerase involved in the biosynthesis of the lipopolysaccharide (LPS). Catalyzes the polymerization of the O-antigen repeat units on the periplasmic face of the inner membrane, leading to the formation of the lipid-linked O-antigen molecule. In vitro, shows a preference for bacteria-based, undecaprenyl-containing substrates rather than eukaryote-based, dolichol-containing substrates. This Escherichia coli protein is O-antigen polymerase.